The sequence spans 223 residues: 7-cyano-7-deazaguanine synthase (223 aa).

Position 12-22 (12-22 (FSGGQDSTTCL)) interacts with ATP. Zn(2+) is bound by residues Cys-189, Cys-198, Cys-201, and Cys-204.

Belongs to the QueC family. Homodimer. Zn(2+) serves as cofactor.

The enzyme catalyses 7-carboxy-7-deazaguanine + NH4(+) + ATP = 7-cyano-7-deazaguanine + ADP + phosphate + H2O + H(+). It functions in the pathway purine metabolism; 7-cyano-7-deazaguanine biosynthesis. Catalyzes the ATP-dependent conversion of 7-carboxy-7-deazaguanine (CDG) to 7-cyano-7-deazaguanine (preQ(0)). This is 7-cyano-7-deazaguanine synthase from Halalkalibacterium halodurans (strain ATCC BAA-125 / DSM 18197 / FERM 7344 / JCM 9153 / C-125) (Bacillus halodurans).